The sequence spans 2183 residues: Genome polyprotein (2183 aa).

Glycine 2 is lipidated: N-myristoyl glycine; by host. Topologically, residues glycine 2–glutamine 1493 are cytoplasmic. The amphipathic alpha-helix stretch occupies residues phenylalanine 566–valine 582. Residues histidine 870 and aspartate 888 each act as for protease 2A activity in the active site. Cysteine 905 and cysteine 907 together coordinate Zn(2+). Cysteine 959 (for protease 2A activity) is an active-site residue. Residues cysteine 965 and histidine 967 each coordinate Zn(2+). The segment at asparagine 1099–glutamine 1171 is membrane-binding. The oligomerization stretch occupies residues asparagine 1099–threonine 1237. Positions alanine 1120–glutamine 1124 are RNA-binding. The 157-residue stretch at glutamate 1203–asparagine 1359 folds into the SF3 helicase domain. Zn(2+)-binding residues include cysteine 1367, cysteine 1379, and cysteine 1384. The C4-type; degenerate zinc finger occupies cysteine 1367–cysteine 1384. The segment at glutamate 1411 to valine 1418 is RNA-binding. Residues leucine 1422 to glutamine 1427 form an oligomerization region. An intramembrane segment occupies alanine 1494 to tyrosine 1509. Residues lysine 1510 to phenylalanine 2183 are Cytoplasmic-facing. An O-(5'-phospho-RNA)-tyrosine modification is found at tyrosine 1519. A Peptidase C3 domain is found at glycine 1539 to phenylalanine 1717. Catalysis depends on for protease 3C activity residues histidine 1578, glutamate 1609, and cysteine 1685. The RdRp catalytic domain occupies glycine 1948 to leucine 2064. Residues aspartate 1954 and aspartate 2050 each coordinate Mg(2+).

It belongs to the picornaviruses polyprotein family. In terms of assembly, interacts with capsid protein VP1 and capsid protein VP3 to form heterotrimeric protomers. As to quaternary structure, interacts with capsid protein VP0, and capsid protein VP3 to form heterotrimeric protomers. Five protomers subsequently associate to form pentamers which serve as building blocks for the capsid. Interacts with capsid protein VP2, capsid protein VP3 and capsid protein VP4 following cleavage of capsid protein VP0. Interacts with host CXADR. Interacts with capsid protein VP1 and capsid protein VP3 in the mature capsid. In terms of assembly, interacts with capsid protein VP0 and capsid protein VP1 to form heterotrimeric protomers. Five protomers subsequently associate to form pentamers which serve as building blocks for the capsid. Interacts with capsid protein VP4 in the mature capsid. Interacts with protein 2C; this interaction may be important for virion morphogenesis. As to quaternary structure, interacts with capsid protein VP1 and capsid protein VP3. Homodimer. In terms of assembly, homohexamer; forms a hexameric ring structure with 6-fold symmetry characteristic of AAA+ ATPases. Interacts (via N-terminus) with host RTN3 (via reticulon domain); this interaction is important for viral replication. Interacts with capsid protein VP3; this interaction may be important for virion morphogenesis. As to quaternary structure, interacts with protein 3CD. Homodimer. Interacts with host GBF1. Interacts (via GOLD domain) with host ACBD3 (via GOLD domain); this interaction allows the formation of a viral protein 3A/ACBD3 heterotetramer with a 2:2 stoichiometry, which will stimulate the recruitment of host PI4KB in order to synthesize PI4P at the viral RNA replication sites. In terms of assembly, interacts with RNA-directed RNA polymerase. As to quaternary structure, interacts with protein 3AB and with RNA-directed RNA polymerase. Interacts with Viral protein genome-linked and with protein 3CD. Mg(2+) serves as cofactor. Specific enzymatic cleavages in vivo by the viral proteases yield processing intermediates and the mature proteins. Post-translationally, myristoylation is required for the formation of pentamers during virus assembly. Further assembly of 12 pentamers and a molecule of genomic RNA generates the provirion. In terms of processing, during virion maturation, immature virions are rendered infectious following cleavage of VP0 into VP4 and VP2. This maturation seems to be an autocatalytic event triggered by the presence of RNA in the capsid and it is followed by a conformational change infectious virion. Myristoylation is required during RNA encapsidation and formation of the mature virus particle. Post-translationally, VPg is uridylylated by the polymerase into VPg-pUpU. This acts as a nucleotide-peptide primer for the genomic RNA replication.

It is found in the virion. Its subcellular location is the host cytoplasm. The protein localises to the host cytoplasmic vesicle membrane. It localises to the host nucleus. The enzyme catalyses a ribonucleoside 5'-triphosphate + H2O = a ribonucleoside 5'-diphosphate + phosphate + H(+). It carries out the reaction Selective cleavage of Tyr-|-Gly bond in the picornavirus polyprotein.. The catalysed reaction is RNA(n) + a ribonucleoside 5'-triphosphate = RNA(n+1) + diphosphate. It catalyses the reaction Selective cleavage of Gln-|-Gly bond in the poliovirus polyprotein. In other picornavirus reactions Glu may be substituted for Gln, and Ser or Thr for Gly.. Replication or transcription is subject to high level of random mutations by the nucleotide analog ribavirin. In terms of biological role, forms an icosahedral capsid of pseudo T=3 symmetry with capsid proteins VP2 and VP3. The capsid is 300 Angstroms in diameter, composed of 60 copies of each capsid protein and enclosing the viral positive strand RNA genome. Capsid protein VP1 mainly forms the vertices of the capsid. Capsid protein VP1 interacts with host CXADR to provide virion attachment to target host cells. This attachment induces virion internalization. Tyrosine kinases are probably involved in the entry process. After binding to its receptor, the capsid undergoes conformational changes. Capsid protein VP1 N-terminus (that contains an amphipathic alpha-helix) and capsid protein VP4 are externalized. Together, they shape a pore in the host membrane through which viral genome is translocated to host cell cytoplasm. Its function is as follows. Forms an icosahedral capsid of pseudo T=3 symmetry with capsid proteins VP2 and VP3. The capsid is 300 Angstroms in diameter, composed of 60 copies of each capsid protein and enclosing the viral positive strand RNA genome. Functionally, lies on the inner surface of the capsid shell. After binding to the host receptor, the capsid undergoes conformational changes. Capsid protein VP4 is released, Capsid protein VP1 N-terminus is externalized, and together, they shape a pore in the host membrane through which the viral genome is translocated into the host cell cytoplasm. Component of immature procapsids, which is cleaved into capsid proteins VP4 and VP2 after maturation. Allows the capsid to remain inactive before the maturation step. In terms of biological role, cysteine protease that cleaves viral polyprotein and specific host proteins. It is responsible for the autocatalytic cleavage between the P1 and P2 regions, which is the first cleavage occurring in the polyprotein. Also cleaves the host translation initiation factor EIF4G1, in order to shut down the capped cellular mRNA translation. Inhibits the host nucleus-cytoplasm protein and RNA trafficking by cleaving host members of the nuclear pores. Counteracts stress granule formation probably by antagonizing its assembly or promoting its dissassembly. Cleaves and inhibits host IFIH1/MDA5, thereby inhibiting the type-I IFN production and the establishment of the antiviral state. Cleaves and inhibits host MAVS, thereby inhibiting the type-I IFN production and the establishment of the antiviral state. Its function is as follows. Plays an essential role in the virus replication cycle by acting as a viroporin. Creates a pore in the host endoplasmic reticulum and as a consequence releases Ca2+ in the cytoplasm of infected cell. In turn, high levels of cytoplasmic calcium may trigger membrane trafficking and transport of viral ER-associated proteins to viroplasms, sites of viral genome replication. Functionally, induces and associates with structural rearrangements of intracellular membranes. Displays RNA-binding, nucleotide binding and NTPase activities. May play a role in virion morphogenesis and viral RNA encapsidation by interacting with the capsid protein VP3. Localizes the viral replication complex to the surface of membranous vesicles. Together with protein 3CD binds the Cis-Active RNA Element (CRE) which is involved in RNA synthesis initiation. Acts as a cofactor to stimulate the activity of 3D polymerase, maybe through a nucleid acid chaperone activity. In terms of biological role, localizes the viral replication complex to the surface of membranous vesicles. It inhibits host cell endoplasmic reticulum-to-Golgi apparatus transport and causes the disassembly of the Golgi complex, possibly through GBF1 interaction. This would result in depletion of MHC, trail receptors and IFN receptors at the host cell surface. Plays an essential role in viral RNA replication by recruiting ACBD3 and PI4KB at the viral replication sites, thereby allowing the formation of the rearranged membranous structures where viral replication takes place. Its function is as follows. Acts as a primer for viral RNA replication and remains covalently bound to viral genomic RNA. VPg is uridylylated prior to priming replication into VPg-pUpU. The oriI viral genomic sequence may act as a template for this. The VPg-pUpU is then used as primer on the genomic RNA poly(A) by the RNA-dependent RNA polymerase to replicate the viral genome. During genome replication, the VPg-RNA linkage is removed by the host TDP2, thereby accelerating replication. During the late stage of the replication cycle, host TDP2 is excluded from sites of viral RNA synthesis and encapsidation, allowing for the generation of progeny virions. Functionally, involved in the viral replication complex and viral polypeptide maturation. It exhibits protease activity with a specificity and catalytic efficiency that is different from protease 3C. Protein 3CD lacks polymerase activity. Protein 3CD binds to the 5'UTR of the viral genome. Replicates the viral genomic RNA on the surface of intracellular membranes. May form linear arrays of subunits that propagate along a strong head-to-tail interaction called interface-I. Covalently attaches UMP to a tyrosine of VPg, which is used to prime RNA synthesis. The positive stranded RNA genome is first replicated at virus induced membranous vesicles, creating a dsRNA genomic replication form. This dsRNA is then used as template to synthesize positive stranded RNA genomes. ss(+)RNA genomes are either translated, replicated or encapsidated. In terms of biological role, major viral protease that mediates proteolytic processing of the polyprotein. Cleaves host EIF5B, contributing to host translation shutoff. Also cleaves host PABPC1, contributing to host translation shutoff. Cleaves host NLRP1, triggers host N-glycine-mediated degradation of the autoinhibitory NLRP1 N-terminal fragment. The protein is Genome polyprotein of Coxsackievirus B4 (strain JVB / Benschoten / New York/51).